The primary structure comprises 179 residues: Putative ADP-ribosylation factor-like protein 5C (179 aa).

A lipid anchor (N-myristoyl glycine) is attached at glycine 2. GTP contacts are provided by residues 23–30 (GLDNEGKT), 66–70 (DIVRP), and 125–128 (NKQD).

The protein belongs to the small GTPase superfamily. Arf family.

Functionally, binds and exchanges GTP and GDP. The polypeptide is Putative ADP-ribosylation factor-like protein 5C (ARL5C) (Homo sapiens (Human)).